The primary structure comprises 156 residues: Large ribosomal subunit protein uL22c (156 aa).

Belongs to the universal ribosomal protein uL22 family. Part of the 50S ribosomal subunit.

It is found in the plastid. It localises to the chloroplast. In terms of biological role, this protein binds specifically to 23S rRNA. Its function is as follows. The globular domain of the protein is located near the polypeptide exit tunnel on the outside of the subunit, while an extended beta-hairpin is found that lines the wall of the exit tunnel in the center of the 70S ribosome. This Buxus microphylla (Littleleaf boxwood) protein is Large ribosomal subunit protein uL22c (rpl22).